The primary structure comprises 183 residues: UPF0397 protein VSAL_I1988 (183 aa).

Transmembrane regions (helical) follow at residues 8 to 28, 41 to 61, 74 to 94, 110 to 130, and 147 to 167; these read VVVI…MFGI, AVLA…VGFI, VWLT…LFPI, FFIF…TSAF, and LCII…FILT.

Belongs to the UPF0397 family.

It localises to the cell membrane. The polypeptide is UPF0397 protein VSAL_I1988 (Aliivibrio salmonicida (strain LFI1238) (Vibrio salmonicida (strain LFI1238))).